A 304-amino-acid chain; its full sequence is tRNA pseudouridine synthase B (304 aa).

Catalysis depends on D38, which acts as the Nucleophile. The region spanning 227 to 302 is the PUA domain; it reads LPKVEIYKDF…RIFKLKKVFK (76 aa).

The protein belongs to the pseudouridine synthase TruB family. Type 1 subfamily.

It catalyses the reaction uridine(55) in tRNA = pseudouridine(55) in tRNA. Functionally, responsible for synthesis of pseudouridine from uracil-55 in the psi GC loop of transfer RNAs. The protein is tRNA pseudouridine synthase B of Thermosipho melanesiensis (strain DSM 12029 / CIP 104789 / BI429).